The primary structure comprises 178 residues: uncharacterized protein (178 aa).

The tract at residues methionine 1–leucine 89 is disordered. Basic and acidic residues-rich tracts occupy residues proline 44–valine 53 and alanine 61–leucine 89.

This is an uncharacterized protein from Schizosaccharomyces pombe (strain 972 / ATCC 24843) (Fission yeast).